The following is a 141-amino-acid chain: Regulator of ribonuclease activity B (141 aa).

Residues 119-132 show a composition bias toward acidic residues; sequence DEDFDDEDDDEDYD. Residues 119–141 are disordered; it reads DEDFDDEDDDEDYDKDGFPIERH.

This sequence belongs to the RraB family. Interacts with the C-terminal region of Rne.

The protein resides in the cytoplasm. In terms of biological role, globally modulates RNA abundance by binding to RNase E (Rne) and regulating its endonucleolytic activity. Can modulate Rne action in a substrate-dependent manner by altering the composition of the degradosome. This is Regulator of ribonuclease activity B from Shewanella amazonensis (strain ATCC BAA-1098 / SB2B).